A 349-amino-acid chain; its full sequence is Small ribosomal subunit biogenesis GTPase RsgA (349 aa).

Residues 1–11 (MSKKKLSKGQQ) are compositionally biased toward basic residues. Residues 1–29 (MSKKKLSKGQQRRVSANHQRRLKKTESKV) form a disordered region. The CP-type G domain occupies 102–272 (HSVLTRPDYY…VIDSPGVREF (171 aa)). GTP contacts are provided by residues 158-161 (NKID) and 212-220 (GQSGVGKSS). Zn(2+) contacts are provided by cysteine 296, cysteine 301, histidine 303, and cysteine 309.

Belongs to the TRAFAC class YlqF/YawG GTPase family. RsgA subfamily. Monomer. Associates with 30S ribosomal subunit, binds 16S rRNA. It depends on Zn(2+) as a cofactor.

Its subcellular location is the cytoplasm. In terms of biological role, one of several proteins that assist in the late maturation steps of the functional core of the 30S ribosomal subunit. Helps release RbfA from mature subunits. May play a role in the assembly of ribosomal proteins into the subunit. Circularly permuted GTPase that catalyzes slow GTP hydrolysis, GTPase activity is stimulated by the 30S ribosomal subunit. In Pectobacterium atrosepticum (strain SCRI 1043 / ATCC BAA-672) (Erwinia carotovora subsp. atroseptica), this protein is Small ribosomal subunit biogenesis GTPase RsgA.